We begin with the raw amino-acid sequence, 141 residues long: Hemoglobin subunit alpha-A/Q/R/T (141 aa).

One can recognise a Globin domain in the interval 1–141; it reads VLSPADKTNV…VSTVLTSKYR (141 aa). Ser-3 is subject to Phosphoserine. Lys-7 is subject to N6-succinyllysine. Thr-8 is subject to Phosphothreonine. Lys-11 is subject to N6-succinyllysine. Lys-16 bears the N6-acetyllysine; alternate mark. At Lys-16 the chain carries N6-succinyllysine; alternate. Residue Tyr-24 is modified to Phosphotyrosine. The residue at position 35 (Ser-35) is a Phosphoserine. At Lys-40 the chain carries N6-succinyllysine. A Phosphoserine modification is found at Ser-49. His-58 is an O2 binding site. His-87 contacts heme b. Position 102 is a phosphoserine (Ser-102). Thr-108 is modified (phosphothreonine). Ser-124 and Ser-131 each carry phosphoserine. Residues Thr-134 and Thr-137 each carry the phosphothreonine modification. Ser-138 is subject to Phosphoserine.

Belongs to the globin family. Heterotetramer of two alpha chains and two beta chains. In terms of tissue distribution, red blood cells.

In terms of biological role, involved in oxygen transport from the lung to the various peripheral tissues. The polypeptide is Hemoglobin subunit alpha-A/Q/R/T (Macaca fascicularis (Crab-eating macaque)).